A 107-amino-acid chain; its full sequence is Heme-degrading monooxygenase (107 aa).

Residues 2–94 form the ABM domain; sequence IIVTNTAKIT…YILDNKISYY (93 aa). Asn6 is a Fe cation binding site. Residue His76 participates in heme binding.

This sequence belongs to the antibiotic biosynthesis monooxygenase family. Heme-degrading monooxygenase IsdG subfamily. As to quaternary structure, homodimer.

It localises to the cytoplasm. It catalyses the reaction heme b + 3 reduced [NADPH--hemoprotein reductase] + 3 O2 = biliverdin IXalpha + CO + Fe(2+) + 3 oxidized [NADPH--hemoprotein reductase] + 3 H2O + H(+). Allows bacterial pathogens to use the host heme as an iron source. Catalyzes the oxidative degradation of the heme macrocyclic porphyrin ring to the biliverdin in the presence of a suitable electron donor such as ascorbate or NADPH--cytochrome P450 reductase, with subsequent release of free iron. The sequence is that of Heme-degrading monooxygenase from Bacillus cereus (strain AH187).